The chain runs to 1720 residues: DNA-directed RNA polymerase I subunit RPA1 (1720 aa).

Zn(2+) is bound by residues C64, C67, C74, H77, C104, and C107. The segment at 110–201 is clamp; it reads LTCPRAVIHL…IALFWKAHMN (92 aa). The Zn(2+) site is built by C205 and C208. S240 carries the post-translational modification Phosphoserine. The clamp stretch occupies residues 320-426; the sequence is FTNGQTVNLQ…IRQILEKKEG (107 aa). Positions 403-416 are rudder; it reads DSEMDKLMMDKYPG. Residues K424, R429, and R436 each contribute to the DNA site. An involved in RRN3 binding to Pol I complex region spans residues 468 to 542; the sequence is YPQPVTPWNV…QGTKIVCRHV (75 aa). R552 is a binding site for RNA. The Mg(2+) site is built by D588, D590, and D592. D592 contacts RNA. The segment at 805–883 is funnel; sequence KPKADVKRQR…NEINKACMPF (79 aa). A bridging helix region spans residues 960-1001; it reads KPPEFFFHCMAGREGLVDTAVKTSRSGYLQRCIIKHLEGLVV. The interval 1060-1155 is mediates the interaction with TOP2A; it reads ADPKKALHHF…SLSVWRPDIY (96 aa). Residues 1207-1248 form a trigger loop region; that stretch reads PGEAVGLLAAQSIGEPSTQMTLNTFHFAGRGEMNVTLGIPRL. R1249 is a DNA binding site. A disordered region spans residues 1365-1498; sequence RNVNTRRATQ…SQEPQGPEAM (134 aa). The segment covering 1373–1390 has biased composition (basic and acidic residues); it reads TQRDLDNAGELGRSRGEQ. Phosphoserine is present on S1386. 2 stretches are compositionally biased toward acidic residues: residues 1391–1412 and 1422–1446; these read EGDEEEEGHIVDAEAEEGDADA and EEEVDYESEEEEEREGEENDDEDMQ. A compositionally biased stretch (basic and acidic residues) spans 1447–1461; that stretch reads EERNPHREGARKTQE. The span at 1462–1474 shows a compositional bias: acidic residues; sequence QDEEVGLGTEEDP.

Belongs to the RNA polymerase beta' chain family. Component of the RNA polymerase I (Pol I) complex consisting of 13 subunits: a ten-subunit catalytic core composed of POLR1A/RPA1, POLR1B/RPA2, POLR1C/RPAC1, POLR1D/RPAC2, POLR1H/RPA12, POLR2E/RPABC1, POLR2F/RPABC2, POLR2H/RPABC3, POLR2K/RPABC4 and POLR2L/RPABC5; a mobile stalk subunit POLR1F/RPA43 protruding from the core and additional subunits homologous to general transcription factors POLR1E/RPA49 and POLR1G/RPA34. Part of Pol I pre-initiation complex (PIC), in which Pol I core assembles with RRN3 and promoter-bound UTBF and SL1/TIF-IB complex. Interacts (via dock II domain) with TOP2A; this interaction may assist Pol I transcription initiation by releasing supercoils occurring during DNA unwinding. Interacts with CAVIN1; this interaction induces the dissociation of Pol I complex paused at rDNA terminator sequences. Interacts with MYO1C. Interacts with ERBB2. Interacts with DDX11. Interacts with RECQL5. It depends on Mg(2+) as a cofactor.

The protein localises to the nucleus. It localises to the nucleolus. Its subcellular location is the chromosome. The catalysed reaction is RNA(n) + a ribonucleoside 5'-triphosphate = RNA(n+1) + diphosphate. Functionally, catalytic core component of RNA polymerase I (Pol I), a DNA-dependent RNA polymerase which synthesizes ribosomal RNA precursors using the four ribonucleoside triphosphates as substrates. Transcribes 47S pre-rRNAs from multicopy rRNA gene clusters, giving rise to 5.8S, 18S and 28S ribosomal RNAs. Pol I-mediated transcription cycle proceeds through transcription initiation, transcription elongation and transcription termination stages. During transcription initiation, Pol I pre-initiation complex (PIC) is recruited by the selectivity factor 1 (SL1/TIF-IB) complex bound to the core promoter that precedes an rDNA repeat unit. The PIC assembly bends the promoter favoring the formation of the transcription bubble and promoter escape. Once the polymerase has escaped from the promoter it enters the elongation phase during which RNA is actively polymerized, based on complementarity with the template DNA strand. Highly processive, assembles in structures referred to as 'Miller trees' where many elongating Pol I complexes queue and transcribe the same rDNA coding regions. At terminator sequences downstream of the rDNA gene, PTRF interacts with Pol I and halts Pol I transcription leading to the release of the RNA transcript and polymerase from the DNA. Forms Pol I active center together with the second largest subunit POLR1B/RPA2. Appends one nucleotide at a time to the 3' end of the nascent RNA, with POLR1A/RPA1 contributing a Mg(2+)-coordinating DxDGD motif, and POLR1B/RPA2 participating in the coordination of a second Mg(2+) ion and providing lysine residues believed to facilitate Watson-Crick base pairing between the incoming nucleotide and the template base. Typically, Mg(2+) ions direct a 5' nucleoside triphosphate to form a phosphodiester bond with the 3' hydroxyl of the preceding nucleotide of the nascent RNA, with the elimination of pyrophosphate. Has proofreading activity: Pauses and backtracks to allow the cleavage of a missincorporated nucleotide via POLR1H/RPA12. High Pol I processivity is associated with decreased transcription fidelity. The sequence is that of DNA-directed RNA polymerase I subunit RPA1 from Homo sapiens (Human).